We begin with the raw amino-acid sequence, 224 residues long: Ribose-5-phosphate isomerase A (224 aa).

Residues 26–29 (TGST), 81–84 (DGAD), and 94–97 (KGGG) each bind substrate. Glutamate 103 acts as the Proton acceptor in catalysis. Residue lysine 121 coordinates substrate.

This sequence belongs to the ribose 5-phosphate isomerase family. As to quaternary structure, homodimer.

The catalysed reaction is aldehydo-D-ribose 5-phosphate = D-ribulose 5-phosphate. It participates in carbohydrate degradation; pentose phosphate pathway; D-ribose 5-phosphate from D-ribulose 5-phosphate (non-oxidative stage): step 1/1. Functionally, catalyzes the reversible conversion of ribose-5-phosphate to ribulose 5-phosphate. This chain is Ribose-5-phosphate isomerase A, found in Listeria monocytogenes serotype 4b (strain F2365).